Consider the following 391-residue polypeptide: Arginine biosynthesis bifunctional protein ArgJ 2 (391 aa).

Lysine 167 and serine 180 together coordinate substrate. The active-site Nucleophile is the serine 180.

The protein belongs to the ArgJ family. As to quaternary structure, heterotetramer of two alpha and two beta chains.

The protein resides in the cytoplasm. It catalyses the reaction N(2)-acetyl-L-ornithine + L-glutamate = N-acetyl-L-glutamate + L-ornithine. The catalysed reaction is L-glutamate + acetyl-CoA = N-acetyl-L-glutamate + CoA + H(+). Its pathway is amino-acid biosynthesis; L-arginine biosynthesis; L-ornithine and N-acetyl-L-glutamate from L-glutamate and N(2)-acetyl-L-ornithine (cyclic): step 1/1. It participates in amino-acid biosynthesis; L-arginine biosynthesis; N(2)-acetyl-L-ornithine from L-glutamate: step 1/4. Catalyzes two activities which are involved in the cyclic version of arginine biosynthesis: the synthesis of N-acetylglutamate from glutamate and acetyl-CoA as the acetyl donor, and of ornithine by transacetylation between N(2)-acetylornithine and glutamate. The sequence is that of Arginine biosynthesis bifunctional protein ArgJ 2 from Streptomyces clavuligerus.